The primary structure comprises 182 residues: Small ribosomal subunit protein uS4c (182 aa).

The tract at residues 12–31 is disordered; that stretch reads PGFTSKRPRSGSDLKNPLRS. Residues 82–143 enclose the S4 RNA-binding domain; sequence MRLDNILFRL…KQRSKALIQN (62 aa).

This sequence belongs to the universal ribosomal protein uS4 family. As to quaternary structure, part of the 30S ribosomal subunit. Contacts protein S5. The interaction surface between S4 and S5 is involved in control of translational fidelity.

It localises to the plastid. Its subcellular location is the chloroplast. One of the primary rRNA binding proteins, it binds directly to 16S rRNA where it nucleates assembly of the body of the 30S subunit. In terms of biological role, with S5 and S12 plays an important role in translational accuracy. The protein is Small ribosomal subunit protein uS4c (rps4) of Hymenocallis littoralis (Beach spider-lily).